Here is a 289-residue protein sequence, read N- to C-terminus: Diaminopimelate epimerase (289 aa).

Positions 11 and 78 each coordinate substrate. Catalysis depends on cysteine 87, which acts as the Proton donor. Residues 88–89, asparagine 163, asparagine 199, and 217–218 each bind substrate; these read GN and ER. Catalysis depends on cysteine 226, which acts as the Proton acceptor. 227–228 is a substrate binding site; it reads GT.

This sequence belongs to the diaminopimelate epimerase family. As to quaternary structure, homodimer.

It is found in the cytoplasm. The enzyme catalyses (2S,6S)-2,6-diaminopimelate = meso-2,6-diaminopimelate. It participates in amino-acid biosynthesis; L-lysine biosynthesis via DAP pathway; DL-2,6-diaminopimelate from LL-2,6-diaminopimelate: step 1/1. Functionally, catalyzes the stereoinversion of LL-2,6-diaminopimelate (L,L-DAP) to meso-diaminopimelate (meso-DAP), a precursor of L-lysine and an essential component of the bacterial peptidoglycan. This Mycolicibacterium vanbaalenii (strain DSM 7251 / JCM 13017 / BCRC 16820 / KCTC 9966 / NRRL B-24157 / PYR-1) (Mycobacterium vanbaalenii) protein is Diaminopimelate epimerase.